We begin with the raw amino-acid sequence, 224 residues long: Late embryogenesis abundant protein, group 3 (224 aa).

2 disordered regions span residues Met1–Thr169 and Asn193–His224. Residues Gly13 to Thr23 are compositionally biased toward basic and acidic residues. 5 tandem repeats follow at residues Val26–Gln36, Thr37–Glu47, Thr48–Glu58, Thr59–Glu69, and Thr70–Glu80. The tract at residues Val26–Glu153 is 12 X 11 AA tandem repeats. Basic and acidic residues-rich tracts occupy residues Thr41–Thr85, Ala92–Gln109, and Glu120–Ala151. The stretch at Ala81–Gln87 is one 6; truncated repeat. Tandem repeats lie at residues Thr88–Glu98, Thr99–Gln109, Lys121–Glu131, Thr132–Glu142, and Ala143–Glu153. Over residues Asp200–His224 the composition is skewed to low complexity.

This sequence belongs to the LEA type 4 family.

This Triticum aestivum (Wheat) protein is Late embryogenesis abundant protein, group 3.